Reading from the N-terminus, the 467-residue chain is UDP-glycosyltransferase 71D2 (467 aa).

Residues Ser-283, 339–341 (SPQ), 356–364 (HCGWNSIVE), and 378–381 (YAEQ) each bind UDP-alpha-D-glucose.

This sequence belongs to the UDP-glycosyltransferase family.

The chain is UDP-glycosyltransferase 71D2 (UGT71D2) from Arabidopsis thaliana (Mouse-ear cress).